We begin with the raw amino-acid sequence, 311 residues long: Cell division protein ZipA (311 aa).

At 1-5 (MQELR) the chain is on the periplasmic side. Residues 6–26 (FVLIVVGALAIMALLFHGLWT) traverse the membrane as a helical segment. Topologically, residues 27–311 (SKKEGKAKFG…QIVEFKAANA (285 aa)) are cytoplasmic. Positions 32 to 54 (KAKFGDKPLSKLDLGESEPKESE) are enriched in basic and acidic residues. The segment at 32-60 (KAKFGDKPLSKLDLGESEPKESEMYVAPE) is disordered.

The protein belongs to the ZipA family. In terms of assembly, interacts with FtsZ via their C-terminal domains.

The protein localises to the cell inner membrane. Functionally, essential cell division protein that stabilizes the FtsZ protofilaments by cross-linking them and that serves as a cytoplasmic membrane anchor for the Z ring. Also required for the recruitment to the septal ring of downstream cell division proteins. The sequence is that of Cell division protein ZipA from Vibrio vulnificus (strain CMCP6).